The sequence spans 512 residues: Polyamine aminopropyltransferase (512 aa).

7 helical membrane-spanning segments follow: residues 19 to 39 (IVSICGIIFEVLFGALGSYIL), 48 to 68 (LTISLFLTGMGIGASLSEKFM), 76 to 96 (VWIEFCVALIGGFSSFIMFGI), 108 to 128 (YLYSITLIIGALTGVELPILI), 151 to 171 (AGGLIGGVLFVFLFRPYFGMV), 172 to 192 (KTAFLVGLINLTVALIVLWLF), and 199 to 219 (FIVHAVIGGVIGVLLIAGLFF). A PABS domain is found at 215 to 450 (AGLFFGEEMA…GNWGFVMASR (236 aa)). The tract at residues 217–457 (LFFGEEMAFN…ASREEIDLDI (241 aa)) is spermidine synthase. Position 245 (Gln245) interacts with S-methyl-5'-thioadenosine. Spermidine-binding residues include His275 and Asp299. S-methyl-5'-thioadenosine contacts are provided by residues Asp319 and 353 to 354 (DA). Catalysis depends on Asp371, which acts as the Proton acceptor.

Belongs to the spermidine/spermine synthase family. Homodimer or homotetramer.

Its subcellular location is the cell membrane. The catalysed reaction is S-adenosyl 3-(methylsulfanyl)propylamine + putrescine = S-methyl-5'-thioadenosine + spermidine + H(+). It participates in amine and polyamine biosynthesis; spermidine biosynthesis; spermidine from putrescine: step 1/1. In terms of biological role, catalyzes the irreversible transfer of a propylamine group from the amino donor S-adenosylmethioninamine (decarboxy-AdoMet) to putrescine (1,4-diaminobutane) to yield spermidine. In Oceanobacillus iheyensis (strain DSM 14371 / CIP 107618 / JCM 11309 / KCTC 3954 / HTE831), this protein is Polyamine aminopropyltransferase.